We begin with the raw amino-acid sequence, 502 residues long: Neuronal acetylcholine receptor subunit alpha-7 (502 aa).

The first 22 residues, 1-22, serve as a signal peptide directing secretion; sequence MCGRRGGIWLALAAALLHVSLQ. The Extracellular portion of the chain corresponds to 23–233; the sequence is GEFQRRLYKE…VTMRRRTLYY (211 aa). 2 residues coordinate Ca(2+): Arg-42 and Val-44. N-linked (GlcNAc...) asparagine glycans are attached at residues Asn-46, Asn-90, and Asn-133. A disulfide bond links Cys-150 and Cys-164. The Ca(2+) site is built by Ser-172 and Tyr-210. Residues Cys-212 and Cys-213 are joined by a disulfide bond. Helical transmembrane passes span 234 to 254, 262 to 282, and 295 to 315; these read GLNLLIPCVLISALALLVFLL, ISLGITVLLSLTVFMLLVAEI, and QYFASTMIIVGLSVVVTVIVL. An essential for TMEM35A/NACHO-mediated proper subunit assembly and trafficking to cell membrane region spans residues 260–267; the sequence is EKISLGIT. The Cytoplasmic segment spans residues 316-469; the sequence is RYHHHDPDGG…WKFAACVVDR (154 aa). Residues 470–490 traverse the membrane as a helical segment; the sequence is LCLMAFSVFTIICTIGILMSA.

This sequence belongs to the ligand-gated ion channel (TC 1.A.9) family. Acetylcholine receptor (TC 1.A.9.1) subfamily. Alpha-7/CHRNA7 sub-subfamily. In terms of assembly, homopentamer. Can also form heteropentamers with CHRNB2, mainly found in basal forebrain cholinergic neurons. Interacts with RIC3; which is required for proper folding and assembly. Interacts with LYPD6. Interacts with CANX. Post-translationally, glycosylations at Asn-46, Asn-90 and Asn-133 are essential for TMEM35A/NACHO-mediated proper subunit assembly and trafficking to the cell membrane. Higly expressed in brain. ALso expressed in immune cells sucha as macrophages.

It localises to the postsynaptic cell membrane. The protein localises to the cell membrane. It catalyses the reaction K(+)(in) = K(+)(out). The catalysed reaction is Na(+)(in) = Na(+)(out). The enzyme catalyses Ca(2+)(in) = Ca(2+)(out). It carries out the reaction choline(out) = choline(in). It catalyses the reaction NH4(+)(in) = NH4(+)(out). The catalysed reaction is L-arginine(in) = L-arginine(out). The enzyme catalyses guanidine(out) = guanidine(in). With respect to regulation, activated by a myriad of ligands such as acetylcholine, cytisine, nicotine, choline and epibatidine. Oligomeric amyloid-beta protein 42 activates specifially CHRNA7:CHRNB2 nAchRs. Activity is modulated by positive allosteric modulators (PAMs), such as flavonoids, with a wide range of chemical diversity, pharmacological sensitivity and efficacy. AChR activity is inhibited by the antagonists alpha-conotoxons RgIA, ImI and ImII, small disulfide-constrained peptides from cone snails. Component of neuronal acetylcholine receptors (nAChRs) that function as pentameric, ligand-gated cation channels with high calcium permeability among other activities. nAChRs are excitatory neurotrasnmitter receptors formed by a collection of nAChR subunits known to mediate synaptic transmission in the nervous system and the neuromuscular junction. Each nAchR subunit confers differential attributes to channel properties, including activation, deactivation and desensitization kinetics, pH sensitivity, cation permeability, and binding to allosteric modulators. CHRNA7 forms homopentameric neuronal acetylcholine receptors abundantly expressed in the central nervous system, characterized by fast desensitization and high calcium permeability. Also forms heteropentamers with CHRNB2, mainly expressed in basal forebrain cholinergic neurons. Involved in the modulation of calcium-dependent signaling pathways and influences the release of neurotransmitters, including dopamine, glutamate and GABA. Involved in the modulation of calcium-dependent signaling pathways and influences the release of neurotransmitters, including dopamine, glutamate and GABA. Also expressed in non-neuronal cells such as immune cells like lymphocytes, monocytes and macrophages. In T cells, activation induces metabotropic signaling that results in an increase of intracellular Ca2+ concentrations, independent of ionotropic receptor functions. In macrophages, required for acetylcholine-mediated inhibition of TNF and other inflammatory cytokine release. Once activated by acetylcholine, nicotine or other agonists, selectively inhibits production of pro-inflammatory cytokines while leaving anti-inflammatory cytokines undisturbed. Stimulates the cholinergic anti-inflammatory pathway, controlling inflammation by inhibiting NFKB nuclear translocation and activating the JAK2-STAT3 pathway, independently of ion channel activity. Also expressed in the urothelium where it modulates reflex bladder activity by increasing intracellular calcium through internal stores and decreasing basal ATP release. The sequence is that of Neuronal acetylcholine receptor subunit alpha-7 (Chrna7) from Mus musculus (Mouse).